A 587-amino-acid polypeptide reads, in one-letter code: Transport inhibitor response 1-like protein Os05g0150500 (587 aa).

One can recognise an F-box domain in the interval 6–63 (SRAACAAAAPPWHSLPDEVWEHAFSFLPAAADRGAAAGACSSWLRAERRSRRRLAVAN). Lys85 is a 1D-myo-inositol hexakisphosphate binding site. The tract at residues 92-93 (DF) is interaction with auxin-responsive proteins. 1D-myo-inositol hexakisphosphate is bound by residues 124 to 125 (KR) and Arg355. The tract at residues 358 to 363 (PSDPFG) is interaction with auxin-responsive proteins. 409–411 (CFR) is a binding site for 1D-myo-inositol hexakisphosphate. Residues 413 to 417 (CILEP) form an interaction with auxin-responsive proteins region. Position 444 (Arg444) interacts with 1D-myo-inositol hexakisphosphate. The tract at residues 472–473 (AF) is interaction with auxin-responsive proteins. 1D-myo-inositol hexakisphosphate contacts are provided by residues 492 to 493 (KK) and Arg517.

In terms of assembly, part of a SCF (SKP1-cullin-F-box) protein ligase complex. May interact with auxin and auxin-responsive proteins.

The protein localises to the nucleus. The protein operates within protein modification; protein ubiquitination. The polypeptide is Transport inhibitor response 1-like protein Os05g0150500 (Oryza sativa subsp. japonica (Rice)).